Consider the following 95-residue polypeptide: Co-chaperonin GroES (95 aa).

Belongs to the GroES chaperonin family. As to quaternary structure, heptamer of 7 subunits arranged in a ring. Interacts with the chaperonin GroEL.

The protein localises to the cytoplasm. In terms of biological role, together with the chaperonin GroEL, plays an essential role in assisting protein folding. The GroEL-GroES system forms a nano-cage that allows encapsulation of the non-native substrate proteins and provides a physical environment optimized to promote and accelerate protein folding. GroES binds to the apical surface of the GroEL ring, thereby capping the opening of the GroEL channel. The protein is Co-chaperonin GroES of Nitratidesulfovibrio vulgaris (strain ATCC 29579 / DSM 644 / CCUG 34227 / NCIMB 8303 / VKM B-1760 / Hildenborough) (Desulfovibrio vulgaris).